The sequence spans 336 residues: Fructose-1,6-bisphosphatase class 1 (336 aa).

Positions 90, 112, 114, and 115 each coordinate Mg(2+). Residues 115–118 (DGSS), Asn-207, and Lys-273 contribute to the substrate site. Glu-279 is a Mg(2+) binding site.

It belongs to the FBPase class 1 family. In terms of assembly, homotetramer. It depends on Mg(2+) as a cofactor.

The protein resides in the cytoplasm. The catalysed reaction is beta-D-fructose 1,6-bisphosphate + H2O = beta-D-fructose 6-phosphate + phosphate. Its pathway is carbohydrate biosynthesis; gluconeogenesis. This Xanthomonas axonopodis pv. citri (strain 306) protein is Fructose-1,6-bisphosphatase class 1.